Here is a 451-residue protein sequence, read N- to C-terminus: Phosphoglucosamine mutase (451 aa).

Catalysis depends on Ser101, which acts as the Phosphoserine intermediate. Residues Ser101, Asp240, Asp242, and Asp244 each contribute to the Mg(2+) site. Ser101 carries the phosphoserine modification.

Belongs to the phosphohexose mutase family. The cofactor is Mg(2+). Activated by phosphorylation.

It carries out the reaction alpha-D-glucosamine 1-phosphate = D-glucosamine 6-phosphate. In terms of biological role, catalyzes the conversion of glucosamine-6-phosphate to glucosamine-1-phosphate. The chain is Phosphoglucosamine mutase from Thioalkalivibrio sulfidiphilus (strain HL-EbGR7).